The primary structure comprises 247 residues: MSIPLLEYKPSSQNQRVPGYEVPNEDTPRIYRIEDAAYDSELKELIWATYRQVFSEHVILKFFRQGNLESQLKNRAISVRDFVRGLAKSEAFKTLVIKSNSNYRLVELALKRLLGRAPYNKDEEIAWSIKIATNGWDGFVDALLDSEEYQSNFGENIVPYQRRRYKDRPFNLVTPRYGNYWRDKLESERYIEGDIKNFLELAKSIEIKTVTFTPVSTANIKIPDTTRNTTPTGIPISVNPSANFPVR.

The 179-residue stretch at 11–189 (SSQNQRVPGY…YWRDKLESER (179 aa)) folds into the PBS-linker domain. Residues 223–247 (PDTTRNTTPTGIPISVNPSANFPVR) form a disordered region.

It belongs to the phycobilisome linker protein family. Part of the phycobilisome, a hemidiscoidal structure that is composed of two distinct substructures: a core complex and a number of rods radiating from the core.

Its subcellular location is the cellular thylakoid membrane. In terms of biological role, rod-core linker protein required for attachment of phycocyanin to allophycocyanin in cores of phycobilisomes. Functionally, linker polypeptides determine the state of aggregation and the location of the disk-shaped phycobiliprotein units within the phycobilisome and modulate their spectroscopic properties in order to mediate a directed and optimal energy transfer. The chain is Phycobilisome rod-core linker polypeptide CpcG2 from Nostoc sp. (strain PCC 7120 / SAG 25.82 / UTEX 2576).